A 605-amino-acid chain; its full sequence is Dolichyl-diphosphooligosaccharide--protein glycosyltransferase subunit 1 (605 aa).

Positions 1 to 22 (MEAPIVLLLLLWLALAPTPGSA) are cleaved as a signal peptide. Topologically, residues 23 to 437 (SSEAPPLVNE…FNKVLMLQEP (415 aa)) are lumenal. Position 185 is an N6-acetyllysine (Lys-185). N-linked (GlcNAc...) asparagine glycosylation is present at Asn-297. Residues 438–455 (LLVVAAFYILFFTVIIYV) form a helical membrane-spanning segment. Topologically, residues 456–605 (RLDFSITKDP…TKIDHILDAL (150 aa)) are cytoplasmic. Lys-536 carries the N6-acetyllysine; alternate modification. Lys-536 is covalently cross-linked (Glycyl lysine isopeptide (Lys-Gly) (interchain with G-Cter in SUMO2); alternate).

This sequence belongs to the OST1 family. As to quaternary structure, component of the oligosaccharyltransferase (OST) complex. OST exists in two different complex forms which contain common core subunits RPN1, RPN2, OST48, OST4, DAD1 and TMEM258, either STT3A or STT3B as catalytic subunits, and form-specific accessory subunits. STT3A complex assembly occurs through the formation of 3 subcomplexes. Subcomplex 1 contains RPN1 and TMEM258, subcomplex 2 contains the STT3A-specific subunits STT3A, DC2/OSTC, and KCP2 as well as the core subunit OST4, and subcomplex 3 contains RPN2, DAD1, and OST48. The STT3A complex can form stable complexes with the Sec61 complex or with both the Sec61 and TRAP complexes. Interacts with TMEM35A/NACHO. Ubiquitinated by the ECS(ASB11) complex. Post-translationally, ufmylated by UFL1 in response to endoplasmic reticulum stress, promoting reticulophagy of endoplasmic reticulum sheets. In terms of tissue distribution, expressed in all tissues tested.

The protein localises to the endoplasmic reticulum membrane. The protein operates within protein modification; protein glycosylation. Subunit of the oligosaccharyl transferase (OST) complex that catalyzes the initial transfer of a defined glycan (Glc(3)Man(9)GlcNAc(2) in eukaryotes) from the lipid carrier dolichol-pyrophosphate to an asparagine residue within an Asn-X-Ser/Thr consensus motif in nascent polypeptide chains, the first step in protein N-glycosylation. N-glycosylation occurs cotranslationally and the complex associates with the Sec61 complex at the channel-forming translocon complex that mediates protein translocation across the endoplasmic reticulum (ER). All subunits are required for a maximal enzyme activity. This is Dolichyl-diphosphooligosaccharide--protein glycosyltransferase subunit 1 from Rattus norvegicus (Rat).